The following is a 403-amino-acid chain: Phosphopentomutase (403 aa).

Mn(2+) is bound by residues D13, D298, H303, D339, H340, and H351.

It belongs to the phosphopentomutase family. Mn(2+) is required as a cofactor.

The protein localises to the cytoplasm. The catalysed reaction is 2-deoxy-alpha-D-ribose 1-phosphate = 2-deoxy-D-ribose 5-phosphate. It carries out the reaction alpha-D-ribose 1-phosphate = D-ribose 5-phosphate. The protein operates within carbohydrate degradation; 2-deoxy-D-ribose 1-phosphate degradation; D-glyceraldehyde 3-phosphate and acetaldehyde from 2-deoxy-alpha-D-ribose 1-phosphate: step 1/2. Functionally, isomerase that catalyzes the conversion of deoxy-ribose 1-phosphate (dRib-1-P) and ribose 1-phosphate (Rib-1-P) to deoxy-ribose 5-phosphate (dRib-5-P) and ribose 5-phosphate (Rib-5-P), respectively. This Streptococcus pneumoniae (strain JJA) protein is Phosphopentomutase.